A 368-amino-acid chain; its full sequence is Membrane glycoprotein UL18 (368 aa).

An N-terminal signal peptide occupies residues M1–G19. The chain crosses the membrane as a helical span at residues I326–F346.

In terms of assembly, interacts with host LILRB1.

It is found in the host membrane. Plays a role in the protection against host NK cell cytotoxicity by interacting with and modulating the activity of the host inhibitory leukocyte Ig-like receptor 1/LILRB1, which is expressed on monocytes, dendritic cells, as well as subsets of T and NK cells. UL18 exerts an inhibitory effect on LIR-1+ NK cells, while it stimulates LIR-1- NK cell. The protein is Membrane glycoprotein UL18 (UL18) of Homo sapiens (Human).